Here is a 129-residue protein sequence, read N- to C-terminus: Large ribosomal subunit protein bL17 (129 aa).

The protein belongs to the bacterial ribosomal protein bL17 family. As to quaternary structure, part of the 50S ribosomal subunit. Contacts protein L32.

The chain is Large ribosomal subunit protein bL17 from Acidovorax ebreus (strain TPSY) (Diaphorobacter sp. (strain TPSY)).